A 58-amino-acid polypeptide reads, in one-letter code: Small ribosomal subunit protein bS21 (58 aa).

The segment at 24 to 58 (TKAGTLQEARKREHYEKPSVKRKRKSEAARKRKKI) is disordered. A compositionally biased stretch (basic and acidic residues) spans 31–42 (EARKREHYEKPS). The segment covering 43–58 (VKRKRKSEAARKRKKI) has biased composition (basic residues).

Belongs to the bacterial ribosomal protein bS21 family.

This is Small ribosomal subunit protein bS21 from Streptococcus thermophilus (strain CNRZ 1066).